The primary structure comprises 3414 residues: Hemocyanin 1 (3414 aa).

The signal sequence occupies residues 1–16; the sequence is MLSVRLLIVVLALANA. Glutamate 17 contacts a divalent metal cation. The tract at residues 17 to 437 is functional unit a (wall); sequence ENLVRKSVEH…PPVKHHQSAN (421 aa). A Cu cation-binding site is contributed by histidine 58. Cysteine 64 and cysteine 73 are disulfide-bonded. Positions 74–76 form a cross-link, 2'-(S-cysteinyl)-histidine (Cys-His); it reads CIH. Residues histidine 76, histidine 85, histidine 195, histidine 199, and histidine 226 each contribute to the Cu cation site. Cysteine 185 and cysteine 252 form a disulfide bridge. A cross-link (2'-(S-cysteinyl)-histidine (Cys-His)) is located at residues 287–290; the sequence is CELH. Residues cysteine 339 and cysteine 351 are joined by a disulfide bond. Asparagine 403 carries N-linked (GlcNAc...) asparagine glycosylation. A functional unit b (wall) region spans residues 438 to 851; the sequence is LLVRKNINDL…RVKFDKVPRS (414 aa). Residue histidine 478 coordinates Cu cation. Cysteine 484 and cysteine 495 form a disulfide bridge. Positions 496–498 form a cross-link, 2'-(S-cysteinyl)-histidine (Cys-His); that stretch reads CVH. Residues histidine 498 and histidine 507 each contribute to the Cu cation site. Asparagine 545 carries N-linked (GlcNAc...) asparagine glycosylation. Cysteine 608 and cysteine 674 are oxidised to a cystine. Cu cation-binding residues include histidine 618, histidine 622, and histidine 649. A WD 1 repeat occupies 628–669; the sequence is SEHFSMSSLHYTAFDPLFYFHHSNVDRLWAVWQALQMRRHKP. Glutamate 737 lines the a divalent metal cation pocket. Residues 852–1271 are functional unit c (wall); that stretch reads RLIRKNVDRL…EVYQAEVTSA (420 aa). Histidine 892 is a binding site for Cu cation. An intrachain disulfide couples cysteine 898 to cysteine 909. Positions 910-912 form a cross-link, 2'-(S-cysteinyl)-histidine (Cys-His); the sequence is CVH. Histidine 912, histidine 921, histidine 1031, histidine 1035, and histidine 1062 together coordinate Cu cation. 2 disulfides stabilise this stretch: cysteine 1021-cysteine 1088 and cysteine 1178-cysteine 1184. Residues 1041 to 1082 form a WD 2 repeat; the sequence is AQPYGMASLRYTAFDPLFYLHHSNTDRIWAIWQALQKYRGKP. Positions 1272–1680 are functional unit d (wall); that stretch reads NRIRKNIENL…AHTDDGHTEP (409 aa). Histidine 1309 contacts Cu cation. Cysteine 1315 and cysteine 1324 form a disulfide bridge. The 2'-(S-cysteinyl)-histidine (Cys-His) cross-link spans 1325–1327; that stretch reads CVH. 5 residues coordinate Cu cation: histidine 1327, histidine 1336, histidine 1440, histidine 1444, and histidine 1471. Intrachain disulfides connect cysteine 1430–cysteine 1497 and cysteine 1585–cysteine 1595. The stretch at 1450–1491 is one WD 3 repeat; that stretch reads KGKYSMSNLDYAAFDPVFFLHHATTDRIWAIWQDLQRFRKRP. The N-linked (GlcNAc...) asparagine glycan is linked to asparagine 1648. The interval 1681 to 2097 is functional unit e (wall); sequence VMIRKDITQL…HDISSHHLSL (417 aa). Histidine 1721 contributes to the Cu cation binding site. Residues cysteine 1727 and cysteine 1738 are joined by a disulfide bond. The segment at residues 1739–1741 is a cross-link (2'-(S-cysteinyl)-histidine (Cys-His)); sequence CVH. Cu cation is bound by residues histidine 1741, histidine 1750, histidine 1863, histidine 1867, and histidine 1894. Cystine bridges form between cysteine 1853–cysteine 1920 and cysteine 2009–cysteine 2015. One copy of the WD 4 repeat lies at 1873–1914; it reads KEPYGIGHLHYASYDPLFYIHHSQTDRIWAIWQSLQRFRGLS. The tract at residues 2098 to 2517 is functional unit f (wall); that stretch reads NKVRHDLSTL…EDHHSSSMAG (420 aa). Histidine 2138 contacts Cu cation. An intrachain disulfide couples cysteine 2144 to cysteine 2154. N-linked (GlcNAc...) asparagine glycosylation is present at asparagine 2145. A cross-link (2'-(S-cysteinyl)-histidine (Cys-His)) is located at residues 2155 to 2157; that stretch reads CIH. Positions 2157, 2166, 2276, 2280, and 2307 each coordinate Cu cation. The WD 5 repeat unit spans residues 2163–2199; the sequence is PHWHRLYTLQFEQALRRHGSSVAVPYWDWTKPIHNIP. 2 cysteine pairs are disulfide-bonded: cysteine 2266-cysteine 2333 and cysteine 2420-cysteine 2426. Residue glutamate 2424 coordinates a divalent metal cation. The segment at 2518-2921 is functional unit g (internal arc); that stretch reads HGVRKEINTL…EKHHEDHHED (404 aa). Histidine 2558 serves as a coordination point for Cu cation. A disulfide bond links cysteine 2564 and cysteine 2574. A glycan (N-linked (GlcNAc...) asparagine) is linked at asparagine 2571. A cross-link (2'-(S-cysteinyl)-histidine (Cys-His)) is located at residues 2575 to 2577; that stretch reads CTH. Residues histidine 2577, histidine 2586, histidine 2686, histidine 2690, and histidine 2717 each contribute to the Cu cation site. Disulfide bonds link cysteine 2676–cysteine 2743 and cysteine 2830–cysteine 2836. A WD 6 repeat occupies 2696-2737; the sequence is LTPYGMSTLEYTTYDPLFWLHHANTDRIWAIWQALQEYRGLP. A functional unit h (internal slab) region spans residues 2922 to 3414; the sequence is ILVRKNIHSL…LRIHVHVDDE (493 aa). Histidine 2962 serves as a coordination point for Cu cation. A disulfide bond links cysteine 2968 and cysteine 2978. Positions 2979-2981 form a cross-link, 2'-(S-cysteinyl)-histidine (Cys-His); it reads CVH. 5 residues coordinate Cu cation: histidine 2981, histidine 2990, histidine 3091, histidine 3095, and histidine 3122. The cysteines at positions 3081 and 3148 are disulfide-linked. Residues 3101–3142 form a WD 7 repeat; the sequence is AEKYSMSTLEYSAFDPYFMIHHASLDKIWIIWQELQKRRVKP. Asparagine 3278 carries an N-linked (GlcNAc...) asparagine glycan. An intrachain disulfide couples cysteine 3367 to cysteine 3400.

It belongs to the tyrosinase family. Hemocyanin subfamily. As to quaternary structure, homo-didecamer, with two decamers assembled face-to-face at their open ends. This didecamer form a stable 25 nM cylinder wall. Post-translationally, probably N-glycosylated. Asn-1280 and Asn-2484 are buried deeply in the protein which make them inaccessible for sugar attachment. Asn-3278 N-glycan is likely to represent a diantennate carbohydrate tree. The didecamer is almost evenly tagged by a total of 120 sugar trees. In terms of tissue distribution, hemolymph.

It localises to the secreted. It is found in the extracellular space. Functionally, hemocyanins are copper-containing oxygen carriers occurring freely dissolved in the hemolymph of many mollusks and arthropods. The polypeptide is Hemocyanin 1 (Megathura crenulata (Giant keyhole limpet)).